A 707-amino-acid polypeptide reads, in one-letter code: Casein kinase 1-like protein HD16 (707 aa).

The tract at residues 19–67 (YDVQDADPAASPVSPAPRGRTGRRGGAAAGRGNKTVAEGGGRKALKPRG) is disordered. The segment covering 24 to 37 (ADPAASPVSPAPRG) has biased composition (low complexity). Positions 147–425 (YITDRKLGKG…KLISLFDGLI (279 aa)) constitute a Protein kinase domain. Residues 153–161 (LGKGGFGQV) and Lys-184 each bind ATP. The Proton acceptor role is filled by Asp-276.

It belongs to the protein kinase superfamily. CK1 Ser/Thr protein kinase family. Casein kinase I subfamily. In terms of assembly, monomer. Interacts with GHD7 (via C-terminus). Interacts with SLR1. Autophosphorylated. In terms of tissue distribution, expressed in roots, leaves and stems. Expressed in leaf vascular bundles, and proximal regions of the shoot and roots.

It is found in the cytoplasm. It localises to the nucleus. It catalyses the reaction L-seryl-[protein] + ATP = O-phospho-L-seryl-[protein] + ADP + H(+). The enzyme catalyses L-threonyl-[protein] + ATP = O-phospho-L-threonyl-[protein] + ADP + H(+). Functionally, casein kinases are operationally defined by their preferential utilization of acidic proteins such as caseins as substrates. It can phosphorylate a large number of proteins. Can phosphorylate casein on threonine residues in vitro. Involved in the regulation of flowering time through gibberellin (GA) signaling, and independently of photoperiod. Phosphorylates the DELLA protein SLR1, stabilizing SLR1 protein and sustaining SLR1 activity as repressor of GA signaling. Required for normal development of male floral organs and grains, through modulation of GA signaling. Targeted and repressed by the homeobox protein HAZ1 during GA signaling. Can phosphorylate phosvitin and SLR1 in vitro. Is not required for clock function in either the presence or the absence of light signals. Involved in a genetic control pathway for photoperiodic flowering under long day (LD) conditions that includes HD1, GHD7, HD5 and HD2. Phosphorylates and activates GHD7, a major floral repressor under LD conditions. Phosphorylation of GHD7 enhances its function in the repression of EHD1, HD3A and HD3B/RFT1, and obviously delaying flowering. This is Casein kinase 1-like protein HD16 from Oryza sativa subsp. japonica (Rice).